The chain runs to 287 residues: Hydroxysteroid 11-beta-dehydrogenase 1-like protein (287 aa).

Positions 1 to 15 (MKVLLLTGLGALFFA) are cleaved as a signal peptide. NADP(+) contacts are provided by residues 36 to 62 (GASAGVGEELAYHYARLGSHLVLTAHT), 87 to 88 (DM), and 114 to 116 (NHI). Ser-165 provides a ligand contact to substrate. Tyr-178 acts as the Proton acceptor in catalysis. NADP(+) contacts are provided by residues 178–182 (YSAAK) and 211–217 (GLRDRAS).

The protein belongs to the short-chain dehydrogenases/reductases (SDR) family.

The protein localises to the secreted. The enzyme catalyses cortisone + NADPH + H(+) = cortisol + NADP(+). Functionally, unidirectional NADP(+)-dependent cortisol dehydrogenase (in vitro). The chain is Hydroxysteroid 11-beta-dehydrogenase 1-like protein (HSD11B1L) from Macaca fascicularis (Crab-eating macaque).